A 165-amino-acid chain; its full sequence is Small ribosomal subunit protein uS3m (165 aa).

A mitochondrion-targeting transit peptide spans 1–30; that stretch reads MNFLKKLLPQVATEVQQLSRSGFHTSSVCC.

The protein belongs to the universal ribosomal protein uS3 family. Component of the mitochondrial ribosome small subunit (28S) which comprises a 12S rRNA and about 30 distinct proteins.

It localises to the mitochondrion. The chain is Small ribosomal subunit protein uS3m (mRpS24) from Drosophila melanogaster (Fruit fly).